The following is a 372-amino-acid chain: Ketol-acid reductoisomerase (NADP(+)) (372 aa).

Positions methionine 1 to aspartate 25 are disordered. A compositionally biased stretch (acidic residues) spans threonine 10 to aspartate 19. One can recognise a KARI N-terminal Rossmann domain in the interval leucine 24–threonine 205. NADP(+)-binding positions include tyrosine 49–glutamine 52, serine 75, serine 77, and aspartate 107–glutamine 110. Histidine 131 is an active-site residue. Glycine 157 is an NADP(+) binding site. The region spanning threonine 206–serine 351 is the KARI C-terminal knotted domain. Mg(2+) is bound by residues aspartate 214, glutamate 218, glutamate 250, and glutamate 254. Serine 275 is a binding site for substrate. The segment at serine 351 to aspartate 372 is disordered. Positions aspartate 352–aspartate 372 are enriched in acidic residues.

Belongs to the ketol-acid reductoisomerase family. It depends on Mg(2+) as a cofactor.

It catalyses the reaction (2R)-2,3-dihydroxy-3-methylbutanoate + NADP(+) = (2S)-2-acetolactate + NADPH + H(+). It carries out the reaction (2R,3R)-2,3-dihydroxy-3-methylpentanoate + NADP(+) = (S)-2-ethyl-2-hydroxy-3-oxobutanoate + NADPH + H(+). It participates in amino-acid biosynthesis; L-isoleucine biosynthesis; L-isoleucine from 2-oxobutanoate: step 2/4. It functions in the pathway amino-acid biosynthesis; L-valine biosynthesis; L-valine from pyruvate: step 2/4. In terms of biological role, involved in the biosynthesis of branched-chain amino acids (BCAA). Catalyzes an alkyl-migration followed by a ketol-acid reduction of (S)-2-acetolactate (S2AL) to yield (R)-2,3-dihydroxy-isovalerate. In the isomerase reaction, S2AL is rearranged via a Mg-dependent methyl migration to produce 3-hydroxy-3-methyl-2-ketobutyrate (HMKB). In the reductase reaction, this 2-ketoacid undergoes a metal-dependent reduction by NADPH to yield (R)-2,3-dihydroxy-isovalerate. In Haloquadratum walsbyi (strain DSM 16790 / HBSQ001), this protein is Ketol-acid reductoisomerase (NADP(+)).